A 178-amino-acid polypeptide reads, in one-letter code: MLKIRLARGGAKKRPYYSIVIADSHSPRDGRFIEKVGSYNPLLKKDDPNRIVVKQERIQEWLGKGAQPTDRVARELSKLGITQWTAGNNPKKGEPGQKAKERAEERAQREADRAAAAAEAAAAPAEEAPAEEAPAEEAAAEAAPEAAAAEEAPAAEAAAEEAAPAAEEAAPAEGEEQA.

Positions 78-178 are disordered; it reads KLGITQWTAG…AAPAEGEEQA (101 aa). Basic and acidic residues predominate over residues 91–113; sequence KKGEPGQKAKERAEERAQREADR. A compositionally biased stretch (low complexity) spans 114–127; the sequence is AAAAAEAAAAPAEE. Acidic residues predominate over residues 128–139; sequence APAEEAPAEEAA. Low complexity predominate over residues 140–172; that stretch reads AEAAPEAAAAEEAPAAEAAAEEAAPAAEEAAPA.

It belongs to the bacterial ribosomal protein bS16 family.

In Phenylobacterium zucineum (strain HLK1), this protein is Small ribosomal subunit protein bS16.